Consider the following 1108-residue polypeptide: Mediator of RNA polymerase II transcription subunit 14 (1108 aa).

3 disordered regions span residues 1-30 (MAAV…GGDT), 35-54 (SSEI…DNPL), and 1048-1108 (QQQR…VDLT). Positions 35–52 (SSEIVQQQTPARSLQSDN) are enriched in polar residues. Low complexity predominate over residues 1048-1080 (QQQRQPVVQPGQQPQVQNQANGVMNRGPQRPGL).

Belongs to the Mediator complex subunit 14 family. In terms of assembly, component of the Mediator complex.

The protein resides in the nucleus. Component of the Mediator complex, a coactivator involved in the regulated transcription of nearly all RNA polymerase II-dependent genes. Mediator functions as a bridge to convey information from gene-specific regulatory proteins to the basal RNA polymerase II transcription machinery. Mediator is recruited to promoters by direct interactions with regulatory proteins and serves as a scaffold for the assembly of a functional preinitiation complex with RNA polymerase II and the general transcription factors. This chain is Mediator of RNA polymerase II transcription subunit 14 (RGR1), found in Pyricularia oryzae (strain 70-15 / ATCC MYA-4617 / FGSC 8958) (Rice blast fungus).